We begin with the raw amino-acid sequence, 248 residues long: Small ribosomal subunit protein uS2 (248 aa).

This sequence belongs to the universal ribosomal protein uS2 family.

This is Small ribosomal subunit protein uS2 from Herminiimonas arsenicoxydans.